The sequence spans 354 residues: RNA 3'-terminal phosphate cyclase (354 aa).

ATP contacts are provided by residues Gln100 and 290-293 (HMGD). His316 functions as the Tele-AMP-histidine intermediate in the catalytic mechanism.

It belongs to the RNA 3'-terminal cyclase family. Type 1 subfamily.

It localises to the cytoplasm. The catalysed reaction is a 3'-end 3'-phospho-ribonucleotide-RNA + ATP = a 3'-end 2',3'-cyclophospho-ribonucleotide-RNA + AMP + diphosphate. Its function is as follows. Catalyzes the conversion of 3'-phosphate to a 2',3'-cyclic phosphodiester at the end of RNA. The mechanism of action of the enzyme occurs in 3 steps: (A) adenylation of the enzyme by ATP; (B) transfer of adenylate to an RNA-N3'P to produce RNA-N3'PP5'A; (C) and attack of the adjacent 2'-hydroxyl on the 3'-phosphorus in the diester linkage to produce the cyclic end product. The biological role of this enzyme is unknown but it is likely to function in some aspects of cellular RNA processing. In Caldivirga maquilingensis (strain ATCC 700844 / DSM 13496 / JCM 10307 / IC-167), this protein is RNA 3'-terminal phosphate cyclase.